Here is a 149-residue protein sequence, read N- to C-terminus: Protein FAM72B (149 aa).

It belongs to the FAM72 family.

In Homo sapiens (Human), this protein is Protein FAM72B (FAM72B).